A 320-amino-acid polypeptide reads, in one-letter code: L-lactate dehydrogenase (320 aa).

NAD(+) is bound by residues 15 to 16 (FV), aspartate 37, lysine 42, tyrosine 68, and 82 to 83 (GA). Substrate-binding positions include glutamine 85, arginine 91, and 123–126 (NPVD). Residues 121-123 (ATN) and serine 146 contribute to the NAD(+) site. 151 to 154 (DSAR) is a binding site for substrate. Residues arginine 156 and 168 to 172 (QNVHA) contribute to the beta-D-fructose 1,6-bisphosphate site. Histidine 178 serves as the catalytic Proton acceptor. Phosphotyrosine is present on tyrosine 223. Residue threonine 232 coordinates substrate.

Belongs to the LDH/MDH superfamily. LDH family. In terms of assembly, homotetramer.

The protein resides in the cytoplasm. The catalysed reaction is (S)-lactate + NAD(+) = pyruvate + NADH + H(+). Its pathway is fermentation; pyruvate fermentation to lactate; (S)-lactate from pyruvate: step 1/1. Allosterically activated by fructose 1,6-bisphosphate (FBP). Functionally, catalyzes the conversion of lactate to pyruvate. In Bacillus subtilis (strain 168), this protein is L-lactate dehydrogenase.